The following is a 178-amino-acid chain: MGGFRFHQYQVVGRALPTENDEHPKIYRMKLWGRNEVCAKSKFWYFMRKLKKVKKSNGQMLAINEIFEKNPTTIKNYGIWLRYQSRTGYHNMYKEYRDTTLNGGVEQMYTEMASRHRVRFPCIQIIKTATVPAKLCKREITKQFHNSKIKFPLVFRKVRPPSRKLKTTYKASKPNLFM.

It belongs to the eukaryotic ribosomal protein eL20 family.

The chain is Large ribosomal subunit protein eL20x (RPL18AC) from Arabidopsis thaliana (Mouse-ear cress).